The primary structure comprises 556 residues: Cholesterol oxidase (556 aa).

Residues Gly18, Glu37, Gly88, Ala93, and Val235 each contribute to the FAD site. His471 functions as the Proton acceptor in the catalytic mechanism. FAD is bound at residue Gly504.

Belongs to the GMC oxidoreductase family. FAD serves as cofactor.

It catalyses the reaction cholesterol + O2 = cholest-5-en-3-one + H2O2. It carries out the reaction cholest-5-en-3-one = cholest-4-en-3-one. The protein operates within steroid metabolism; cholesterol degradation. Bifunctional enzyme that catalyzes the oxidation and isomerization of cholesterol to cholestenone (cholest-4-en-3-one), an initial step in the cholesterol degradation process. The protein is Cholesterol oxidase of Acinetobacter baumannii.